The following is a 546-amino-acid chain: ATP synthase subunit alpha (546 aa).

173-180 (GDRQTGKT) serves as a coordination point for ATP. The interval 520 to 546 (VDKKTAPKSVTPVDQEQIKAGKAQEKK) is disordered. The span at 535 to 546 (EQIKAGKAQEKK) shows a compositional bias: basic and acidic residues.

It belongs to the ATPase alpha/beta chains family. In terms of assembly, F-type ATPases have 2 components, CF(1) - the catalytic core - and CF(0) - the membrane proton channel. CF(1) has five subunits: alpha(3), beta(3), gamma(1), delta(1), epsilon(1). CF(0) has three main subunits: a(1), b(2) and c(9-12). The alpha and beta chains form an alternating ring which encloses part of the gamma chain. CF(1) is attached to CF(0) by a central stalk formed by the gamma and epsilon chains, while a peripheral stalk is formed by the delta and b chains.

Its subcellular location is the cell membrane. The enzyme catalyses ATP + H2O + 4 H(+)(in) = ADP + phosphate + 5 H(+)(out). Functionally, produces ATP from ADP in the presence of a proton gradient across the membrane. The alpha chain is a regulatory subunit. The sequence is that of ATP synthase subunit alpha from Bifidobacterium animalis subsp. lactis (strain AD011).